The sequence spans 144 residues: Ribonuclease VapC37 (144 aa).

The region spanning 3–137 (IVDANVLLYA…DFGRFEGVRW (135 aa)) is the PINc domain. Mg(2+) is bound by residues Asp5 and Asp90.

This sequence belongs to the PINc/VapC protein family. Mg(2+) serves as cofactor.

It localises to the secreted. Functionally, probable toxic component of a type II toxin-antitoxin (TA) system. An RNase. Upon expression in M.smegmatis inhibits colony formation. The putative cognate antitoxin is VapB37. The protein is Ribonuclease VapC37 of Mycobacterium tuberculosis (strain ATCC 25618 / H37Rv).